The sequence spans 556 residues: MLRARSAVSQSWKGFKTFSCVAVEVKNEPVLEFKEGSKERAELEEALRNLKGKTEEIPCVIGNEEVWTKDIRFQLSPFNHSHQVAKFCYADKDLLNKAIEASVAARREWDLKPVSDRAQIFFKAADIISGPKRAEVLAKTMIGQGKTVVQAEIDAAPELIDFFRFNAKHAIELEDQQPLDSDGSTNTMLYRGLEGFVAAVAPFNFTAIGGNLAGTPALMGNVVLWKPSDTAMSASYAVYKILRESGLPPNIIQFVPADGPVFGDTVTSSEHLAGINFTGSVPTFKRLWKQVAQNLDIYKNFPRVAGECGGKNFHFVHKSADVRSVVTGTIRSAFEYGGQKCSACSRMYVPDSLWPQIRQGLLDVYKQIKVGDPVEDFSTFFSAVIDDKSFSRIKGWLEHARSSPHLKIIAGGNCDDKKGYFVEPTIIETTDPQEKIMNEEIFGPVLTVYVYPENDYKKVLHLIDNTSPYALTGAIFPQDKSVIEEAGKALRNAAGNYYINDKSTGSIVAQQPFGGARASGTNDKPGGPHYVLRWTSPQVVKQTHVPLTEWKYPYMS.

The transit peptide at 1–17 (MLRARSAVSQSWKGFKT) directs the protein to the mitochondrion. Residues lysine 226 and 279–283 (GSVPT) contribute to the NAD(+) site. The active-site Proton acceptor is the glutamate 307. Cysteine 341 serves as the catalytic Nucleophile. Glutamate 440 serves as a coordination point for NAD(+). Residue serine 506 participates in substrate binding.

Belongs to the aldehyde dehydrogenase family.

The protein resides in the mitochondrion matrix. The enzyme catalyses L-glutamate 5-semialdehyde + NAD(+) + H2O = L-glutamate + NADH + 2 H(+). Its pathway is amino-acid degradation; L-proline degradation into L-glutamate; L-glutamate from L-proline: step 2/2. Functionally, irreversible conversion of delta-1-pyrroline-5-carboxylate (P5C), derived either from proline or ornithine, to glutamate. This is a necessary step in the pathway interconnecting the urea and tricarboxylic acid cycles. The chain is Delta-1-pyrroline-5-carboxylate dehydrogenase, mitochondrial (aldh4a1) from Danio rerio (Zebrafish).